Here is a 72-residue protein sequence, read N- to C-terminus: Prokaryotic ubiquitin-like protein Pup (72 aa).

The segment covering 1-10 (MATKDTGGGQ) has biased composition (gly residues). The disordered stretch occupies residues 1-45 (MATKDTGGGQQKATRNTEEVEEQAQDAQASEDLKERQEKLSDDVD). Residues 9–60 (GQQKATRNTEEVEEQAQDAQASEDLKERQEKLSDDVDSVLDEIDDVLEENAE) are a coiled coil. The ARC ATPase binding stretch occupies residues 28-66 (QASEDLKERQEKLSDDVDSVLDEIDDVLEENAEDFVRSF). Positions 31 to 42 (EDLKERQEKLSD) are enriched in basic and acidic residues. Residue Glu72 forms an Isoglutamyl lysine isopeptide (Glu-Lys) (interchain with K-? in acceptor proteins) linkage.

The protein belongs to the prokaryotic ubiquitin-like protein family. Strongly interacts with the proteasome-associated ATPase ARC through a hydrophobic interface; the interacting region of Pup lies in its C-terminal half. There is one Pup binding site per ARC hexamer ring.

The protein operates within protein degradation; proteasomal Pup-dependent pathway. Protein modifier that is covalently attached to lysine residues of substrate proteins, thereby targeting them for proteasomal degradation. The tagging system is termed pupylation. In Streptomyces avermitilis (strain ATCC 31267 / DSM 46492 / JCM 5070 / NBRC 14893 / NCIMB 12804 / NRRL 8165 / MA-4680), this protein is Prokaryotic ubiquitin-like protein Pup.